Reading from the N-terminus, the 549-residue chain is Urocanate hydratase (549 aa).

Residues G46 to G47, Q124, G170 to G172, E190, R195, N236 to A237, Q257 to H261, Y267 to V268, and Y316 contribute to the NAD(+) site. Residue C404 is part of the active site. Position 486 (G486) interacts with NAD(+).

It belongs to the urocanase family. The cofactor is NAD(+).

It is found in the cytoplasm. The catalysed reaction is 4-imidazolone-5-propanoate = trans-urocanate + H2O. Its pathway is amino-acid degradation; L-histidine degradation into L-glutamate; N-formimidoyl-L-glutamate from L-histidine: step 2/3. Its function is as follows. Catalyzes the conversion of urocanate to 4-imidazolone-5-propionate. This Natranaerobius thermophilus (strain ATCC BAA-1301 / DSM 18059 / JW/NM-WN-LF) protein is Urocanate hydratase.